The chain runs to 327 residues: MKEIELNSDSLEIYEKSASEKLNKKDLVDLWNLDLKNLLDISYSLKKLFNKEKIDLCSIMNAKSGVCSENCIFCSQSKHNSSKIDTYELKSKEEILKNAKSVEKYSNRFSIVVSGKSVTDLEFENIIESIEEIQNKTKLKVCVSLGLLNKDKLKALKEKNVRIHNNLETSENYFKNICTSHDYIDKIKVILEAKKMGLEMCSGGIFGMGESVADRVDLLLDLKKLDVDSVALNLLNPICGTRIYDKINSGEFIEINHTDALKSICIARIALPKKVIRLCGGREHVLKDMQKYSLYVLDGLMIGNYLTTNGQNIQSDLKMIDEMGFKQ.

One can recognise a Radical SAM core domain in the interval 49-282 (FNKEKIDLCS…KKVIRLCGGR (234 aa)). Positions 67, 71, and 74 each coordinate [4Fe-4S] cluster. The [2Fe-2S] cluster site is built by Ser110, Cys142, Cys201, and Arg277.

It belongs to the radical SAM superfamily. Biotin synthase family. In terms of assembly, homodimer. Requires [4Fe-4S] cluster as cofactor. [2Fe-2S] cluster is required as a cofactor.

The enzyme catalyses (4R,5S)-dethiobiotin + (sulfur carrier)-SH + 2 reduced [2Fe-2S]-[ferredoxin] + 2 S-adenosyl-L-methionine = (sulfur carrier)-H + biotin + 2 5'-deoxyadenosine + 2 L-methionine + 2 oxidized [2Fe-2S]-[ferredoxin]. Its pathway is cofactor biosynthesis; biotin biosynthesis; biotin from 7,8-diaminononanoate: step 2/2. Its function is as follows. Catalyzes the conversion of dethiobiotin (DTB) to biotin by the insertion of a sulfur atom into dethiobiotin via a radical-based mechanism. This Methanococcus maripaludis (strain C7 / ATCC BAA-1331) protein is Biotin synthase.